The sequence spans 902 residues: Translation initiation factor IF-2 (902 aa).

Positions asparagine 137–glutamate 177 are enriched in basic and acidic residues. Disordered stretches follow at residues asparagine 137–methionine 248 and histidine 266–threonine 314. Low complexity-rich tracts occupy residues glutamate 178–alanine 229 and arginine 279–serine 291. The tr-type G domain occupies serine 401–lysine 570. Residues glycine 410–threonine 417 form a G1 region. Glycine 410–threonine 417 lines the GTP pocket. The tract at residues glycine 435–histidine 439 is G2. Residues aspartate 456 to glycine 459 are G3. GTP contacts are provided by residues aspartate 456–histidine 460 and asparagine 510–aspartate 513. A G4 region spans residues asparagine 510–aspartate 513. Residues serine 546–lysine 548 are G5.

This sequence belongs to the TRAFAC class translation factor GTPase superfamily. Classic translation factor GTPase family. IF-2 subfamily.

It is found in the cytoplasm. One of the essential components for the initiation of protein synthesis. Protects formylmethionyl-tRNA from spontaneous hydrolysis and promotes its binding to the 30S ribosomal subunits. Also involved in the hydrolysis of GTP during the formation of the 70S ribosomal complex. In Xanthomonas campestris pv. campestris (strain 8004), this protein is Translation initiation factor IF-2.